A 459-amino-acid chain; its full sequence is Peptidyl-prolyl cis-trans isomerase FKBP4 (459 aa).

At M1 the chain carries N-acetylmethionine; in peptidyl-prolyl cis-trans isomerase FKBP4; alternate. Residues 1-24 form a disordered region; sequence MTAEEMKATESGAQSAPLPMEGVD. T2 carries the N-acetylthreonine; in peptidyl-prolyl cis-trans isomerase FKBP4, N-terminally processed; partial modification. A PPIase FKBP-type 1 domain is found at 50-138; the sequence is GDRVFVHYTG…VFEVELFEFK (89 aa). T143 carries the post-translational modification Phosphothreonine; by CK2. In terms of domain architecture, PPIase FKBP-type 2 spans 167–253; sequence GAIVEVALEG…KYELHLKSFE (87 aa). A Phosphotyrosine modification is found at Y220. The tract at residues 267–400 is interaction with tubulin; that stretch reads LEQSTIVKER…TQLAVCQQRI (134 aa). TPR repeat units follow at residues 270–303, 319–352, and 353–386; these read STIV…LEYE, LASH…DSNN, and EKGL…YPNN. At K282 the chain carries N6-acetyllysine. An Omega-N-methylarginine modification is found at R373. The interval 421-459 is disordered; the sequence is EENKAKAEASSGDHPTDTEMKEEQKSNTAGSQSQVETEA. The segment covering 434 to 445 has biased composition (basic and acidic residues); sequence HPTDTEMKEEQK. Phosphothreonine is present on T436. K441 participates in a covalent cross-link: Glycyl lysine isopeptide (Lys-Gly) (interchain with G-Cter in SUMO1). The segment covering 446 to 459 has biased composition (polar residues); it reads SNTAGSQSQVETEA. Phosphoserine occurs at positions 451 and 453.

As to quaternary structure, homodimer. Interacts with GLMN. Associates with HSP90AA1 and HSP70 in steroid hormone receptor complexes. Also interacts with peroxisomal phytanoyl-CoA alpha-hydroxylase (PHYH). Interacts with NR3C1 and dynein. Interacts with HSF1 in the HSP90 complex. Associates with tubulin. Interacts with MAPT/TAU. Interacts (via TPR domain) with S100A1, S100A2 and S100A6; the interaction is Ca(2+) dependent. Interaction with S100A1 and S100A2 (but not with S100A6) leads to inhibition of FKBP4-HSP90 interaction. Interacts with dynein; causes partially NR3C1 transport to the nucleus. Phosphorylation by CK2 results in loss of HSP90 binding activity. As to expression, widely expressed.

It localises to the cytoplasm. Its subcellular location is the cytosol. The protein localises to the mitochondrion. The protein resides in the nucleus. It is found in the cytoskeleton. It localises to the cell projection. Its subcellular location is the axon. The enzyme catalyses [protein]-peptidylproline (omega=180) = [protein]-peptidylproline (omega=0). With respect to regulation, inhibited by FK506. In terms of biological role, immunophilin protein with PPIase and co-chaperone activities. Component of steroid receptors heterocomplexes through interaction with heat-shock protein 90 (HSP90). May play a role in the intracellular trafficking of heterooligomeric forms of steroid hormone receptors between cytoplasm and nuclear compartments. The isomerase activity controls neuronal growth cones via regulation of TRPC1 channel opening. Also acts as a regulator of microtubule dynamics by inhibiting MAPT/TAU ability to promote microtubule assembly. May have a protective role against oxidative stress in mitochondria. This Homo sapiens (Human) protein is Peptidyl-prolyl cis-trans isomerase FKBP4 (FKBP4).